The following is a 424-amino-acid chain: tRNA(Met) cytidine acetate ligase (424 aa).

ATP is bound by residues 7 to 20 (ITEY…HLHH), G102, N174, and R199.

The protein belongs to the TmcAL family.

It is found in the cytoplasm. The enzyme catalyses cytidine(34) in elongator tRNA(Met) + acetate + ATP = N(4)-acetylcytidine(34) in elongator tRNA(Met) + AMP + diphosphate. In terms of biological role, catalyzes the formation of N(4)-acetylcytidine (ac(4)C) at the wobble position of elongator tRNA(Met), using acetate and ATP as substrates. First activates an acetate ion to form acetyladenylate (Ac-AMP) and then transfers the acetyl group to tRNA to form ac(4)C34. The protein is tRNA(Met) cytidine acetate ligase of Alkaliphilus metalliredigens (strain QYMF).